We begin with the raw amino-acid sequence, 220 residues long: uncharacterized protein (220 aa).

The segment at 194–220 (DQSQQQATKSNSKTKKLKGNHGEKTKI) is disordered. The segment covering 195–204 (QSQQQATKSN) has biased composition (polar residues).

This is an uncharacterized protein from Borreliella burgdorferi (strain ATCC 35210 / DSM 4680 / CIP 102532 / B31) (Borrelia burgdorferi).